Consider the following 336-residue polypeptide: Type II methyltransferase M2.HphI (336 aa).

Belongs to the N(4)/N(6)-methyltransferase family.

The catalysed reaction is a 2'-deoxyadenosine in DNA + S-adenosyl-L-methionine = an N(6)-methyl-2'-deoxyadenosine in DNA + S-adenosyl-L-homocysteine + H(+). Functionally, an alpha subtype methylase that recognizes the double-stranded sequence 5'-GGTGA-3', probably methylates A-5 on the top strand, and protects the DNA from cleavage by the HphI endonuclease. This is Type II methyltransferase M2.HphI (hphIBM) from Haemophilus parahaemolyticus.